Consider the following 487-residue polypeptide: 2-aminomuconic semialdehyde dehydrogenase (487 aa).

Residue 209–215 (GTGPRVG) coordinates NAD(+). The Proton acceptor role is filled by Glu-253. Residue Cys-287 is the Nucleophile of the active site. The residue at position 362 (Ser-362) is a Phosphoserine.

It belongs to the aldehyde dehydrogenase family. In terms of tissue distribution, highly expressed in adult kidney and liver. Detected at lower levels in fetal liver and kidney.

Its subcellular location is the cytoplasm. The catalysed reaction is 2-aminomuconate 6-semialdehyde + NAD(+) + H2O = (2Z,4E)-2-aminomuconate + NADH + 2 H(+). The protein operates within amino-acid degradation; L-kynurenine degradation. Functionally, catalyzes the NAD-dependent oxidation of 2-aminomuconic semialdehyde of the kynurenine metabolic pathway in L-tryptophan degradation. The polypeptide is 2-aminomuconic semialdehyde dehydrogenase (Homo sapiens (Human)).